We begin with the raw amino-acid sequence, 352 residues long: Transcription factor BHLH156 (352 aa).

Residues glycine 59–lysine 141 are disordered. Residues arginine 130–arginine 143 are basic motif. In terms of domain architecture, bHLH spans arginine 130–leucine 179. The segment at valine 144 to leucine 179 is helix-loop-helix motif. The segment at glutamate 194–arginine 216 is disordered. A compositionally biased stretch (low complexity) spans alanine 206–arginine 216.

This sequence belongs to the bHLH protein family. Forms homodimers. Interacts with IRO2 in the nucleus. Expressed in the meristematic zone of lateral and primary roots.

The protein localises to the nucleus. Its function is as follows. Transcription factor involved in positive regulation of genes involved in strategy II iron acquisition, including genes for mugineic acid (MA) family phytosiderophores biosynthesis, and genes involved in S-adenosylmethionine cycle and iron transport. May play a role in the regulation of iron deficiency response by promoting the nuclear localization of IRO2. Possesses transactivation activity in yeast. In Oryza sativa subsp. japonica (Rice), this protein is Transcription factor BHLH156.